Reading from the N-terminus, the 308-residue chain is Mycothiol acetyltransferase (308 aa).

1D-myo-inositol 2-(L-cysteinylamino)-2-deoxy-alpha-D-glucopyranoside is bound at residue Glu44. Position 83 to 85 (83 to 85 (AVV)) interacts with acetyl-CoA. Positions 161–308 (VRLRTYAGSA…DVAYGRPEGD (148 aa)) constitute an N-acetyltransferase domain. Residues Glu188, Lys230, and Glu238 each coordinate 1D-myo-inositol 2-(L-cysteinylamino)-2-deoxy-alpha-D-glucopyranoside. Acetyl-CoA is bound by residues 242–244 (VGV) and 249–255 (QGRGLGR). Tyr276 lines the 1D-myo-inositol 2-(L-cysteinylamino)-2-deoxy-alpha-D-glucopyranoside pocket. Acetyl-CoA is bound at residue 281-286 (NTAALH).

This sequence belongs to the acetyltransferase family. MshD subfamily. Monomer.

It catalyses the reaction 1D-myo-inositol 2-(L-cysteinylamino)-2-deoxy-alpha-D-glucopyranoside + acetyl-CoA = mycothiol + CoA + H(+). Functionally, catalyzes the transfer of acetyl from acetyl-CoA to desacetylmycothiol (Cys-GlcN-Ins) to form mycothiol. The sequence is that of Mycothiol acetyltransferase from Gordonia bronchialis (strain ATCC 25592 / DSM 43247 / BCRC 13721 / JCM 3198 / KCTC 3076 / NBRC 16047 / NCTC 10667) (Rhodococcus bronchialis).